The primary structure comprises 333 residues: CMP-N-acetylneuraminate-beta-galactosamide-alpha-2,3-sialyltransferase 4 (333 aa).

Residues 1-8 are Cytoplasmic-facing; the sequence is MTSKSHWK. The chain crosses the membrane as a helical; Signal-anchor for type II membrane protein span at residues 9-26; sequence LLALALVLVVVMVWYSIS. Topologically, residues 27 to 333 are lumenal; it reads REDRYIEFFY…MGAVKNLTYF (307 aa). Residues Asn61, Asn131, Asn310, and Asn329 are each glycosylated (N-linked (GlcNAc...) asparagine). Residues Cys120 and Cys273 are joined by a disulfide bond.

It belongs to the glycosyltransferase 29 family. Broadly expressed among tissues with highest levels in the small intestine and colon.

The protein resides in the golgi apparatus. The protein localises to the golgi stack membrane. The enzyme catalyses a beta-D-galactosyl-(1-&gt;3)-N-acetyl-beta-D-galactosaminyl derivative + CMP-N-acetyl-beta-neuraminate = an N-acetyl-alpha-neuraminyl-(2-&gt;3)-beta-D-galactosyl-(1-&gt;3)-N-acetyl-beta-D-galactosaminyl derivative + CMP + H(+). It carries out the reaction a beta-D-galactosyl-(1-&gt;3)-N-acetyl-alpha-D-galactosaminyl derivative + CMP-N-acetyl-beta-neuraminate = an N-acetyl-alpha-neuraminyl-(2-&gt;3)-beta-D-galactosyl-(1-&gt;3)-N-acetyl-alpha-D-galactosaminyl derivative + CMP + H(+). The catalysed reaction is a beta-D-galactosyl-(1-&gt;4)-N-acetyl-beta-D-glucosaminyl derivative + CMP-N-acetyl-beta-neuraminate = an N-acetyl-alpha-neuraminyl-(2-&gt;3)-beta-D-galactosyl-(1-&gt;4)-N-acetyl-beta-D-glucosaminyl derivative + CMP + H(+). It catalyses the reaction a ganglioside GM1 (d18:1(4E)) + CMP-N-acetyl-beta-neuraminate = a ganglioside GD1a (d18:1(4E)) + CMP + H(+). The enzyme catalyses a ganglioside GA1 (d18:1(4E)) + CMP-N-acetyl-beta-neuraminate = a ganglioside GM1b (d18:1(4E)) + CMP + H(+). It carries out the reaction a ganglioside GT1c (d18:1(4E)) + CMP-N-acetyl-beta-neuraminate = a ganglioside GQ1c (d18:1(4E)) + CMP + H(+). The catalysed reaction is a neolactoside nLc4Cer + CMP-N-acetyl-beta-neuraminate = a neolactoside IV(3)-alpha-NeuAc-nLc4Cer + CMP + H(+). It catalyses the reaction a neolactoside nLc4Cer(d18:1(4E)) + CMP-N-acetyl-beta-neuraminate = a neolactoside IV(3)-alpha-NeuAc-nLc4Cer(d18:1(4E)) + CMP + H(+). It functions in the pathway protein modification; protein glycosylation. In terms of biological role, a beta-galactoside alpha2-3 sialyltransferase involved in terminal sialylation of glycoproteins and glycolipids. Catalyzes the transfer of sialic acid (N-acetyl-neuraminic acid; Neu5Ac) from the nucleotide sugar donor CMP-Neu5Ac onto acceptor Galbeta-(1-&gt;3)-GalNAc- and Galbeta-(1-&gt;4)-GlcNAc-terminated glycoconjugates through an alpha2-3 linkage. Plays a major role in hemostasis. Responsible for sialylation of plasma VWF/von Willebrand factor, preventing its recognition by asialoglycoprotein receptors (ASGPR) and subsequent clearance. Regulates ASGPR-mediated clearance of platelets. Participates in the biosynthesis of the sialyl Lewis X epitopes, both on O- and N-glycans, which are recognized by SELE/E-selectin, SELP/P-selectin and SELL/L-selectin. Essential for selectin-mediated rolling and adhesion of leukocytes during extravasation. Contributes to adhesion and transendothelial migration of neutrophils likely through terminal sialylation of CXCR2. In glycosphingolipid biosynthesis, sialylates GM1 and GA1 gangliosides to form GD1a and GM1b, respectively. Metabolizes brain c-series ganglioside GT1c forming GQ1c. Synthesizes ganglioside LM1 (IV3Neu5Ac-nLc4Cer), a major structural component of peripheral nerve myelin. This chain is CMP-N-acetylneuraminate-beta-galactosamide-alpha-2,3-sialyltransferase 4 (St3gal4), found in Mus musculus (Mouse).